The chain runs to 116 residues: RNA guanine-N7 methyltransferase activating subunit (116 aa).

Residues 1-55 (MAEALGAQELYEKMFEQRFTANDKEYQEYLKREQDQPPIVEDWKMGNQRNTDRYR) form an interaction with RNMT region. Positions 31–116 (KREQDQPPIV…SNQRFHSDRY (86 aa)) are disordered. An RNMT-activating domain motif is present at residues 36–42 (QPPIVED). The tract at residues 56–116 (DNRHHRGWDG…SNQRFHSDRY (61 aa)) is RNA-binding. Low complexity predominate over residues 67–78 (QNWSSNSYNQSY). A compositionally biased stretch (polar residues) spans 97–110 (YQQGHYTHNPSNQR).

This sequence belongs to the RAM family.

The protein localises to the nucleus. Functionally, regulatory subunit of the mRNA-capping methyltransferase RNMT:RAMAC complex that methylates the N7 position of the added guanosine to the 5'-cap structure of mRNAs. Promotes the recruitment of the methyl donor, S-adenosyl-L-methionine, to RNMT. Regulates RNMT expression by a post-transcriptional stabilizing mechanism. Binds RNA. The sequence is that of RNA guanine-N7 methyltransferase activating subunit (ramac) from Xenopus tropicalis (Western clawed frog).